A 389-amino-acid polypeptide reads, in one-letter code: Ribonucleoside-diphosphate reductase subunit M2 (389 aa).

Ser-20 carries the phosphoserine modification. The residue at position 33 (Thr-33) is a Phosphothreonine. Residues 49–51 (RRI) carry the Cy motif. Residues Asp-138, Glu-169, and His-172 each contribute to the Fe cation site. Residue Tyr-176 is part of the active site. Residues Glu-232, Glu-266, and His-269 each contribute to the Fe cation site.

It belongs to the ribonucleoside diphosphate reductase small chain family. In terms of assembly, heterodimer of a large and a small subunit. Interacts (via Cy motif and when phosphorylated at Thr-33) with CCNF; the interaction occurs exclusively in G2 and early M. Fe cation is required as a cofactor. Post-translationally, phosphorylation on Ser-20 relieves the inhibitory effect on Wnt signaling. Phosphorylated on Thr-33 by CDK1 and CDK2; predominantly in G2 and M phase. Ubiquitinated by the SCF(CCNF) E3 ubiquitin-protein ligase complex; leading to its degradation by the proteasome.

It localises to the cytoplasm. The protein resides in the nucleus. The catalysed reaction is a 2'-deoxyribonucleoside 5'-diphosphate + [thioredoxin]-disulfide + H2O = a ribonucleoside 5'-diphosphate + [thioredoxin]-dithiol. Provides the precursors necessary for DNA synthesis. Catalyzes the biosynthesis of deoxyribonucleotides from the corresponding ribonucleotides. Inhibits Wnt signaling. This chain is Ribonucleoside-diphosphate reductase subunit M2 (RRM2), found in Homo sapiens (Human).